The sequence spans 184 residues: Tumor necrosis factor receptor superfamily member 13C (184 aa).

The Extracellular segment spans residues 1–78; the sequence is MRRGPRSLRG…EAALPLPGLL (78 aa). A TNFR-Cys; truncated repeat occupies 18-35; it reads PCVPAECFDLLVRHCVAC. 2 disulfides stabilise this stretch: C19–C32 and C24–C35. An essential for TNFSF13B/TALL1/BAFF/BLyS binding region spans residues 26–31; the sequence is DLLVRH. The segment at 43 to 62 is disordered; the sequence is PKPAGASSPAPRTALQPQES. A helical; Signal-anchor for type III membrane protein transmembrane segment spans residues 79 to 99; the sequence is FGAPALLGLALVLALVLVGLV. Topologically, residues 100-184 are cytoplasmic; it reads SWRRRQRRLR…TTKTAGPEQQ (85 aa). Residues 107–184 are disordered; the sequence is RLRGASSAEA…TTKTAGPEQQ (78 aa). Over residues 118-128 the composition is skewed to basic and acidic residues; sequence DGDKDAPEPLD. Polar residues predominate over residues 168 to 184; the sequence is LGSTELVTTKTAGPEQQ.

Highly expressed in spleen and lymph node, and in resting B-cells. Detected at lower levels in activated B-cells, resting CD4+ T-cells, in thymus and peripheral blood leukocytes.

It localises to the membrane. Its function is as follows. B-cell receptor specific for TNFSF13B/TALL1/BAFF/BLyS. Promotes the survival of mature B-cells and the B-cell response. The protein is Tumor necrosis factor receptor superfamily member 13C (TNFRSF13C) of Homo sapiens (Human).